The primary structure comprises 305 residues: Oxygen-dependent coproporphyrinogen-III oxidase (305 aa).

Serine 92 provides a ligand contact to substrate. A divalent metal cation-binding residues include histidine 96 and histidine 106. Histidine 106 functions as the Proton donor in the catalytic mechanism. 108-110 is a substrate binding site; it reads NVR. Positions 145 and 175 each coordinate a divalent metal cation. The tract at residues 239-274 is important for dimerization; it reads YVEFNLLFDRGTLFGLQSGGRAESILISLPPLVRWE. 257–259 serves as a coordination point for substrate; the sequence is GGR.

The protein belongs to the aerobic coproporphyrinogen-III oxidase family. Homodimer. The cofactor is a divalent metal cation.

The protein localises to the cytoplasm. It catalyses the reaction coproporphyrinogen III + O2 + 2 H(+) = protoporphyrinogen IX + 2 CO2 + 2 H2O. It participates in porphyrin-containing compound metabolism; protoporphyrin-IX biosynthesis; protoporphyrinogen-IX from coproporphyrinogen-III (O2 route): step 1/1. Functionally, involved in the heme biosynthesis. Catalyzes the aerobic oxidative decarboxylation of propionate groups of rings A and B of coproporphyrinogen-III to yield the vinyl groups in protoporphyrinogen-IX. The polypeptide is Oxygen-dependent coproporphyrinogen-III oxidase (Xylella fastidiosa (strain M12)).